A 281-amino-acid chain; its full sequence is Bidirectional sugar transporter SWEET14 (281 aa).

At 1–6 the chain is on the extracellular side; the sequence is MVLTHN. Residues 7-27 form a helical membrane-spanning segment; that stretch reads VLAVTFGVLGNIISFIVFLAP. The MtN3/slv 1 domain occupies 11–97; the sequence is TFGVLGNIIS…ILFITYANKK (87 aa). Over 28–42 the chain is Cytoplasmic; that stretch reads VPTFVRICKKKSIEG. A helical transmembrane segment spans residues 43–63; that stretch reads FESLPYVSALFSAMLWIYYAL. Residues 64–70 are Extracellular-facing; it reads QKDGAGF. Residues 71 to 91 traverse the membrane as a helical segment; sequence LLITINAVGCFIETIYIILFI. Topologically, residues 92–104 are cytoplasmic; it reads TYANKKARISTLK. The helical transmembrane segment at 105-125 threads the bilayer; that stretch reads VLGLLNFLGFAAIILVCELLT. Residues 126–132 are Extracellular-facing; it reads KGSNREK. Residues 133–153 form a helical membrane-spanning segment; the sequence is VLGGICVGFSVCVFAAPLSIM. Positions 133–216 constitute a MtN3/slv 2 domain; it reads VLGGICVGFS…MILYVIFKYY (84 aa). Topologically, residues 154–166 are cytoplasmic; the sequence is RVVIRTKSVEFMP. Residues 167–187 form a helical membrane-spanning segment; the sequence is FSLSLFLTISAITWLFYGLAI. Residues 188–192 are Extracellular-facing; the sequence is KDFYV. A helical membrane pass occupies residues 193–213; it reads ALPNILGAFLGAVQMILYVIF. The Cytoplasmic portion of the chain corresponds to 214–281; the sequence is KYYKTPLVVD…EDQMDKKMPN (68 aa). A compositionally biased stretch (polar residues) spans 244–259; sequence TPASGDLTVQPQTNPD. The interval 244–281 is disordered; sequence TPASGDLTVQPQTNPDVSHPIKTHGGDLEDQMDKKMPN. Positions 267–281 are enriched in basic and acidic residues; that stretch reads HGGDLEDQMDKKMPN.

This sequence belongs to the SWEET sugar transporter family. Forms homooligomers and/or heterooligomers.

The protein resides in the cell membrane. In terms of biological role, mediates both low-affinity uptake and efflux of sugar across the plasma membrane. This Arabidopsis thaliana (Mouse-ear cress) protein is Bidirectional sugar transporter SWEET14.